Here is a 63-residue protein sequence, read N- to C-terminus: Overexpressed in colon carcinoma 1 protein homolog (63 aa).

Residues 1–12 show a composition bias toward low complexity; that stretch reads MGCGNSTAASAG. The segment at 1 to 40 is disordered; sequence MGCGNSTAASAGAGQGPAGAAKDVTEESITEDDKRRNYGG.

It belongs to the OCC1 family.

This Bos taurus (Bovine) protein is Overexpressed in colon carcinoma 1 protein homolog.